The sequence spans 171 residues: Der GTPase-activating protein YihI (171 aa).

2 disordered regions span residues 1–99 (MKKP…QAEL) and 145–171 (LSYDDDEEDDEEDEKQEDMMRLLRGGN). Basic and acidic residues predominate over residues 20 to 30 (TREELNQEARD). Positions 31–40 (RKRLKKHRGH) are enriched in basic residues. Residues 147–160 (YDDDEEDDEEDEKQ) show a composition bias toward acidic residues.

This sequence belongs to the YihI family. As to quaternary structure, interacts with Der.

In terms of biological role, a GTPase-activating protein (GAP) that modifies Der/EngA GTPase function. May play a role in ribosome biogenesis. This Salmonella agona (strain SL483) protein is Der GTPase-activating protein YihI.